We begin with the raw amino-acid sequence, 573 residues long: Estrogen receptor beta (573 aa).

Residues 15–170 (QEVDSSKVGE…CFAGKGDMHF (156 aa)) form a modulating region. NR C4-type zinc fingers lie at residues 171-191 (CAVC…CEGC) and 207-231 (CPAT…LRKC). The segment at residues 171–236 (CAVCHDYASG…RLRKCYEVGM (66 aa)) is a DNA-binding region (nuclear receptor). Residues 291–527 (TPEQLINRII…DLLLEMLDAN (237 aa)) form the NR LBD domain. Low complexity-rich tracts occupy residues 534–552 (MSAS…AQSQ) and 559–573 (CSGE…SSTI). The tract at residues 534–573 (MSASYSSQPSPWSQAAQSQPGPPPSCSGECPCPPKESSTI) is disordered.

It belongs to the nuclear hormone receptor family. NR3 subfamily. In terms of assembly, binds DNA as a homodimer. Can form a heterodimer with ER-alpha. As to expression, liver.

It localises to the nucleus. Functionally, binds estrogens with an affinity similar to that of ER-alpha, and activates expression of reporter genes containing estrogen response elements (ERE) in an estrogen-dependent manner. In Anguilla japonica (Japanese eel), this protein is Estrogen receptor beta (esr2).